The following is a 615-amino-acid chain: Sodium-dependent dopamine transporter (615 aa).

The tract at residues 1–39 is disordered; sequence MQLVPTDDPDEKIGRTSNGMQNATLPIDGPVNTEPKDPA. Residues 1–46 lie on the Cytoplasmic side of the membrane; it reads MQLVPTDDPDEKIGRTSNGMQNATLPIDGPVNTEPKDPAREQWSGK. Polar residues predominate over residues 15 to 24; sequence RTSNGMQNAT. Residues 47–72 traverse the membrane as a helical segment; the sequence is LDFLLSVVGFAVDLGNIWRFPYLCFK. Na(+)-binding residues include G55, A57, V58, and N62. The Extracellular portion of the chain corresponds to 73–76; the sequence is NGGG. Residues 77-100 form a helical membrane-spanning segment; that stretch reads VFLIPYSIMVLLTGVPLFYMELCL. The Cytoplasmic segment spans residues 101-120; sequence GQYYRKGAITTWGRICPLFK. Residues 121–151 traverse the membrane as a helical segment; that stretch reads GIGYCVILTAFYVDFFYNVILAWGLHYLYTS. The Extracellular segment spans residues 152–229; it reads FSFNLPWASC…IRSVTDLGNV (78 aa). A disulfide bridge links C161 with C170. 2 N-linked (GlcNAc...) asparagine glycosylation sites follow: N162 and N187. The chain crosses the membrane as a helical span at residues 230-250; the sequence is RWDIALSLFVVYLICYFSMWK. Residues 251 to 253 lie on the Cytoplasmic side of the membrane; sequence GIH. A helical transmembrane segment spans residues 254–278; sequence TSGKVVWFTALFPYVVLGILFIRGV. The Extracellular portion of the chain corresponds to 279–302; the sequence is TLPGWQNGIEYYLRPNFEMLKRPS. A helical transmembrane segment spans residues 303–328; it reads VWQDAATQVFFSLGPGFGVLMAYSSY. S314 serves as a coordination point for Na(+). Over 329-334 the chain is Cytoplasmic; sequence NDFHNN. A helical transmembrane segment spans residues 335 to 358; it reads VYVDALFTSFINCATSFLSGFVIF. A Na(+)-binding site is contributed by N346. At 359-398 the chain is on the extracellular side; it reads SVLGYMSCKSGKPIEAVAQEGPGLVFVVYPEALSTMPYAP. The chain crosses the membrane as a helical span at residues 399 to 424; the sequence is FWSVLFFLMLMTLGLDSSFGGSEAII. Na(+) contacts are provided by L411, D414, and S415. The Cytoplasmic segment spans residues 425–439; it reads TGLSDEFPILKKNRE. The chain crosses the membrane as a helical span at residues 440–460; the sequence is VFVGCLFAFYMVIGIAMCTEG. G461 is a topological domain (extracellular). A helical membrane pass occupies residues 462–488; it reads ILIMEWLIIYGTTWGLLIAVFCEAMVI. At 489–518 the chain is on the cytoplasmic side; it reads AYIYGLRQFVHDVKEMMGFRPGNYWKFCWS. The chain crosses the membrane as a helical span at residues 519–541; sequence CAAPFILLSMITSNFINYQALTY. At 542 to 544 the chain is on the extracellular side; that stretch reads QDY. The chain crosses the membrane as a helical span at residues 545-565; the sequence is TYPTAANVIGIIFALSGASFI. Topologically, residues 566–615 are cytoplasmic; it reads PLVGIYKFVNARGNTISEKWQRVTMPYRKRPNQTEYIPIPTTQPHSDIML.

Belongs to the sodium:neurotransmitter symporter (SNF) (TC 2.A.22) family.

It is found in the cell membrane. Its function is as follows. Dopamine transporter. Terminates the action of dopamine by its high affinity sodium-dependent reuptake into presynaptic terminals. Plays a role in the learned avoidance behavior of animals exposed to food that induces mitochondrial stress. The chain is Sodium-dependent dopamine transporter from Caenorhabditis elegans.